The following is a 235-amino-acid chain: uncharacterized protein (235 aa).

Disordered regions lie at residues 1–36 (MGMLAPGPLQGRRPRKGHKGQEDAVAPGCKASGRGS) and 213–235 (VKTRKSKRRSGEGSHLTTSILEQ).

This is an uncharacterized protein from Homo sapiens (Human).